The following is a 282-amino-acid chain: Bifunctional protein FolD (282 aa).

NADP(+) contacts are provided by residues N160 to S162, S185, and I228.

The protein belongs to the tetrahydrofolate dehydrogenase/cyclohydrolase family. As to quaternary structure, homodimer.

The enzyme catalyses (6R)-5,10-methylene-5,6,7,8-tetrahydrofolate + NADP(+) = (6R)-5,10-methenyltetrahydrofolate + NADPH. It catalyses the reaction (6R)-5,10-methenyltetrahydrofolate + H2O = (6R)-10-formyltetrahydrofolate + H(+). It participates in one-carbon metabolism; tetrahydrofolate interconversion. In terms of biological role, catalyzes the oxidation of 5,10-methylenetetrahydrofolate to 5,10-methenyltetrahydrofolate and then the hydrolysis of 5,10-methenyltetrahydrofolate to 10-formyltetrahydrofolate. In Cenarchaeum symbiosum (strain A), this protein is Bifunctional protein FolD.